The following is a 559-amino-acid chain: uncharacterized protein (559 aa).

Residues 1 to 10 (MSGRRGDHPG) show a composition bias toward basic and acidic residues. Residues 1–76 (MSGRRGDHPG…ERSRVPPRTT (76 aa)) form a disordered region. 11 consecutive transmembrane segments (helical) span residues 128–148 (FAVD…AAAS), 155–175 (VALY…LIGP), 186–206 (VALA…IMNY), 208–228 (GATG…MMVF), 259–279 (VFGL…VEFV), 283–303 (LFQL…GASL), 358–378 (LWGN…PAFV), 387–407 (WVQL…NFAG), 428–448 (VLVT…ATAI), 490–510 (LAWV…WVGF), and 515–535 (ALLI…SLIP).

This sequence to M.leprae ML2143.

The protein resides in the cell membrane. This is an uncharacterized protein from Mycobacterium tuberculosis (strain CDC 1551 / Oshkosh).